Reading from the N-terminus, the 146-residue chain is MESPGPGGPPLVQAPYTVLLLPLGTSRQDPGAQNFFLWLQMMQALEREQDALWQGLELLEHGQAWFADRLRETQQRQLQLGALGEDFLMDLHSETDAPLLTRIQKVNACLHSLIHKELSKHRKGVTQSTGEVVSQAPPGPKGPTLV.

The interval 121 to 146 (HRKGVTQSTGEVVSQAPPGPKGPTLV) is disordered. A compositionally biased stretch (pro residues) spans 137 to 146 (PPGPKGPTLV).

The sequence is that of Suppressor APC domain-containing protein 1 (Sapcd1) from Mus musculus (Mouse).